The sequence spans 186 residues: NAD(+) phosphorylase MbcT (186 aa).

This sequence belongs to the MbcT/ParT/Res family. As to quaternary structure, forms a heterotetramer with cognate antitoxin MbcA.

The enzyme catalyses phosphate + NAD(+) = ADP-alpha-D-ribose 1''-phosphate + nicotinamide + H(+). Toxic component of a type II toxin-antitoxin (TA) system. Degrades NAD(+) by phosphorolysis. Neutralized by its cognate antitoxin MbcA. The polypeptide is NAD(+) phosphorylase MbcT (mbcT) (Mycobacterium bovis (strain ATCC BAA-935 / AF2122/97)).